We begin with the raw amino-acid sequence, 189 residues long: Protein F29A7.6 (189 aa).

Residues 124–161 (KSLGGQKLAALDKKSQSKRERRQQNERNEETTGGRRFN) are disordered. A compositionally biased stretch (basic and acidic residues) spans 133-161 (ALDKKSQSKRERRQQNERNEETTGGRRFN).

It belongs to the MPP6 family.

This Caenorhabditis elegans protein is Protein F29A7.6.